A 197-amino-acid polypeptide reads, in one-letter code: Dephospho-CoA kinase (197 aa).

Residues 2–197 (IVGLTGGIAS…YQQILSLNAA (196 aa)) enclose the DPCK domain. 10–15 (ASGKTL) contributes to the ATP binding site.

It belongs to the CoaE family.

Its subcellular location is the cytoplasm. The enzyme catalyses 3'-dephospho-CoA + ATP = ADP + CoA + H(+). It participates in cofactor biosynthesis; coenzyme A biosynthesis; CoA from (R)-pantothenate: step 5/5. Functionally, catalyzes the phosphorylation of the 3'-hydroxyl group of dephosphocoenzyme A to form coenzyme A. The chain is Dephospho-CoA kinase from Dichelobacter nodosus (Bacteroides nodosus).